The primary structure comprises 119 residues: UPF0342 protein Athe_0692 (119 aa).

The protein belongs to the UPF0342 family.

In Caldicellulosiruptor bescii (strain ATCC BAA-1888 / DSM 6725 / KCTC 15123 / Z-1320) (Anaerocellum thermophilum), this protein is UPF0342 protein Athe_0692.